A 407-amino-acid polypeptide reads, in one-letter code: Aspartate aminotransferase, cytoplasmic (407 aa).

Positions 39, 136, and 189 each coordinate L-aspartate. An N6-(pyridoxal phosphate)lysine modification is found at Lys-253. Residue Arg-381 coordinates L-aspartate.

Belongs to the class-I pyridoxal-phosphate-dependent aminotransferase family. In terms of assembly, homodimer. Pyridoxal 5'-phosphate is required as a cofactor.

The protein localises to the cytoplasm. It carries out the reaction L-aspartate + 2-oxoglutarate = oxaloacetate + L-glutamate. In terms of biological role, important for the metabolism of amino acids and Krebs-cycle related organic acids. In plants, it is involved in nitrogen metabolism and in aspects of carbon and energy metabolism. This Oryza sativa subsp. japonica (Rice) protein is Aspartate aminotransferase, cytoplasmic.